Consider the following 248-residue polypeptide: Probable transcriptional regulatory protein PSPPH_3775 (248 aa).

This sequence belongs to the TACO1 family.

The protein resides in the cytoplasm. The chain is Probable transcriptional regulatory protein PSPPH_3775 from Pseudomonas savastanoi pv. phaseolicola (strain 1448A / Race 6) (Pseudomonas syringae pv. phaseolicola (strain 1448A / Race 6)).